The sequence spans 582 residues: MTIEKDESTWATFKRLWPHISLYKAGLGVAVVALVINALSDTYMISLLKPLLDEGFGSADSDFLKKMPFIILAMMFIRGLSGFVSGYCMSWVASNVVMRIRRQIFNHFMHMPVSYFDQESTGRLLSRITYDSEQVAAATSKALVNIVRESASIIGLLGLMFWNSWQLSLVLVVIAPVVAFAISNVSKRFRKISKNMQTAMGSLTATSEQMLKGHKVVLSYGGQKVESERFDNISNHMRQQNMKMVVAQGLANPIIQMIASFALVTVLYLASVDSIKETLTPGTFTVVFSAMFGLLRPLKGLTSVTSDFQRGMAACQTLFELMDMDKEKDDGTIEKDTVKGDIKVDNVTFTYPTADGPALRNVSFDLPAGKTIALVGRSGSGKSTIANLFTRFYDVDSGEISLDGDKIEDYRLPNLRKHFALVSQNVHLFNDTVANNIAYASEGKFTRLEIEKAAELAYASDFINKMDDGFDTMIGENGASLSGGQRQRIAIARALLQNAPVLILDEATSALDTESEKAIQSALDELQKDKTVLVIAHRLSTIEDADQILVVDEGEVVERGNHAELIAHDGAYAQLHRIQFGD.

The next 5 membrane-spanning stretches (helical) occupy residues 16-36 (LWPH…ALVI), 69-89 (FIIL…GYCM), 153-173 (IIGL…VLVV), 250-270 (LANP…LYLA), and 275-295 (IKET…FGLL). Positions 29–310 (VAVVALVINA…LTSVTSDFQR (282 aa)) constitute an ABC transmembrane type-1 domain. Residues 342–578 (IKVDNVTFTY…DGAYAQLHRI (237 aa)) enclose the ABC transporter domain. 376-383 (GRSGSGKS) is a binding site for ATP.

Belongs to the ABC transporter superfamily. Lipid exporter (TC 3.A.1.106) family. Homodimer.

It is found in the cell inner membrane. The catalysed reaction is ATP + H2O + lipid A-core oligosaccharideSide 1 = ADP + phosphate + lipid A-core oligosaccharideSide 2.. Functionally, involved in lipopolysaccharide (LPS) biosynthesis. Translocates lipid A-core from the inner to the outer leaflet of the inner membrane. Transmembrane domains (TMD) form a pore in the inner membrane and the ATP-binding domain (NBD) is responsible for energy generation. The protein is ATP-dependent lipid A-core flippase of Aliivibrio fischeri (strain ATCC 700601 / ES114) (Vibrio fischeri).